Here is a 648-residue protein sequence, read N- to C-terminus: DNA mismatch repair protein MutL (648 aa).

The tract at residues Glu336–Arg443 is disordered. A compositionally biased stretch (polar residues) spans Ser370–Glu381. The segment covering Ser383–Ala410 has biased composition (basic and acidic residues).

It belongs to the DNA mismatch repair MutL/HexB family.

This protein is involved in the repair of mismatches in DNA. It is required for dam-dependent methyl-directed DNA mismatch repair. May act as a 'molecular matchmaker', a protein that promotes the formation of a stable complex between two or more DNA-binding proteins in an ATP-dependent manner without itself being part of a final effector complex. This is DNA mismatch repair protein MutL from Shewanella sp. (strain ANA-3).